The chain runs to 504 residues: Signal transduction histidine-protein kinase/phosphatase MprB (504 aa).

The Cytoplasmic segment spans residues 1 to 26 (MWWFRRRDRAPLRATSSLSLRWRVML). The chain crosses the membrane as a helical span at residues 27 to 47 (LAMSMVAMVVVLMSFAVYAVI). Residues 48-163 (SAALYSDIDN…PTEAVMNKLR (116 aa)) lie on the Extracellular side of the membrane. A helical transmembrane segment spans residues 164-184 (WVLLIVGGIGVAVAAVAGGMV). Residues 185-504 (TRAGLRPVGR…SVESQSTRAT (320 aa)) are Cytoplasmic-facing. Positions 186 to 238 (RAGLRPVGRLTEAAERVARTDDLRPIPVFGSDELARLTEAFNLMLRALAESRE) constitute an HAMP domain. A Histidine kinase domain is found at 246–466 (DAGHELRTPL…SIYVLLPGRR (221 aa)). Residue histidine 249 is modified to Phosphohistidine; by autocatalysis. The tract at residues 471–504 (QLPGATAGARSTDIENSRGSANVISVESQSTRAT) is disordered. Polar residues predominate over residues 487-504 (SRGSANVISVESQSTRAT).

Requires Mg(2+) as cofactor. The cofactor is Mn(2+). In terms of processing, autophosphorylated.

It is found in the cell membrane. It carries out the reaction ATP + protein L-histidine = ADP + protein N-phospho-L-histidine.. Member of the two-component regulatory system MprB/MprA which contributes to maintaining a balance among several systems involved in stress resistance and is required for establishment and maintenance of persistent infection in the host. In response to environmental signals MprB acts both as a membrane-associated protein kinase that undergoes autophosphorylation and subsequently transfers the phosphate to MprA, and a protein phosphatase that dephosphorylates phospho-MprA. The sequence is that of Signal transduction histidine-protein kinase/phosphatase MprB (mprB) from Mycobacterium tuberculosis (strain ATCC 25177 / H37Ra).